The sequence spans 61 residues: Metallothionein-2A (61 aa).

Met1 is subject to N-acetylmethionine. Positions 1–29 (MDPNCSCAAGGSCTCAGSCKCKDCKCTSC) are beta. The a divalent metal cation site is built by Cys5, Cys7, Cys13, Cys15, Cys19, Cys21, Cys24, Cys26, Cys29, Cys33, Cys34, Cys36, Cys37, Cys41, Cys44, Cys48, Cys50, and Cys57. The alpha stretch occupies residues 30-61 (KKSCCSCCPVGCAKCAQGCICKGASDKCSCCA). Residue Ser58 is modified to Phosphoserine. A divalent metal cation contacts are provided by Cys59 and Cys60.

It belongs to the metallothionein superfamily. Type 1 family. As to quaternary structure, interacts with EOLA1.

Its function is as follows. Metallothioneins have a high content of cysteine residues that bind various heavy metals; these proteins are transcriptionally regulated by both heavy metals and glucocorticoids. This chain is Metallothionein-2A (MT2A), found in Sus scrofa (Pig).